The chain runs to 160 residues: uncharacterized protein (160 aa).

This is an uncharacterized protein from Mycobacterium tuberculosis (strain CDC 1551 / Oshkosh).